The chain runs to 134 residues: Cytochrome b (134 aa).

The next 3 helical transmembrane spans lie at 33-53, 77-98, and 113-133; these read FGSL…FLAM, WVLR…YVHV, and WNVG…GYVL. Residues H83 and H97 each contribute to the heme b site.

Belongs to the cytochrome b family. As to quaternary structure, the cytochrome bc1 complex contains 11 subunits: 3 respiratory subunits (MT-CYB, CYC1 and UQCRFS1), 2 core proteins (UQCRC1 and UQCRC2) and 6 low-molecular weight proteins (UQCRH/QCR6, UQCRB/QCR7, UQCRQ/QCR8, UQCR10/QCR9, UQCR11/QCR10 and a cleavage product of UQCRFS1). This cytochrome bc1 complex then forms a dimer. Heme b serves as cofactor.

It localises to the mitochondrion inner membrane. Component of the ubiquinol-cytochrome c reductase complex (complex III or cytochrome b-c1 complex) that is part of the mitochondrial respiratory chain. The b-c1 complex mediates electron transfer from ubiquinol to cytochrome c. Contributes to the generation of a proton gradient across the mitochondrial membrane that is then used for ATP synthesis. This Anoura caudifer (Hairy-legged long-tongued bat) protein is Cytochrome b (MT-CYB).